The chain runs to 367 residues: Putative heat shock 70 kDa protein 7 (367 aa).

It belongs to the heat shock protein 70 family.

This is Putative heat shock 70 kDa protein 7 (HSPA7) from Homo sapiens (Human).